The chain runs to 122 residues: Small ribosomal subunit protein uS13 (122 aa).

Positions 99 to 122 (RGQRTHTNARTRKGPAKAIAGKKK) are disordered.

The protein belongs to the universal ribosomal protein uS13 family. As to quaternary structure, part of the 30S ribosomal subunit. Forms a loose heterodimer with protein S19. Forms two bridges to the 50S subunit in the 70S ribosome.

Functionally, located at the top of the head of the 30S subunit, it contacts several helices of the 16S rRNA. In the 70S ribosome it contacts the 23S rRNA (bridge B1a) and protein L5 of the 50S subunit (bridge B1b), connecting the 2 subunits; these bridges are implicated in subunit movement. Contacts the tRNAs in the A and P-sites. The polypeptide is Small ribosomal subunit protein uS13 (Sinorhizobium medicae (strain WSM419) (Ensifer medicae)).